A 163-amino-acid polypeptide reads, in one-letter code: ATP synthase subunit b (163 aa).

A helical membrane pass occupies residues 1–21 (MISFNLTSIVNLVGFLAFMFL).

It belongs to the ATPase B chain family. In terms of assembly, F-type ATPases have 2 components, F(1) - the catalytic core - and F(0) - the membrane proton channel. F(1) has five subunits: alpha(3), beta(3), gamma(1), delta(1), epsilon(1). F(0) has three main subunits: a(1), b(2) and c(10-14). The alpha and beta chains form an alternating ring which encloses part of the gamma chain. F(1) is attached to F(0) by a central stalk formed by the gamma and epsilon chains, while a peripheral stalk is formed by the delta and b chains.

Its subcellular location is the cell inner membrane. Functionally, f(1)F(0) ATP synthase produces ATP from ADP in the presence of a proton or sodium gradient. F-type ATPases consist of two structural domains, F(1) containing the extramembraneous catalytic core and F(0) containing the membrane proton channel, linked together by a central stalk and a peripheral stalk. During catalysis, ATP synthesis in the catalytic domain of F(1) is coupled via a rotary mechanism of the central stalk subunits to proton translocation. Component of the F(0) channel, it forms part of the peripheral stalk, linking F(1) to F(0). The protein is ATP synthase subunit b of Petrotoga mobilis (strain DSM 10674 / SJ95).